A 443-amino-acid polypeptide reads, in one-letter code: Immediate-early protein ICP-46 homolog (443 aa).

A coiled-coil region spans residues 82–110 (EFSEHEQEELKEKMAQLNHCLEDCELDYS).

It belongs to the IIV-6 393L family.

The sequence is that of Immediate-early protein ICP-46 homolog from Aedes vexans (Inland floodwater mosquito).